The primary structure comprises 344 residues: Probable pectinesterase 67 (344 aa).

The signal sequence occupies residues 1–23 (MGHRTRMILVLTLVVMSIWGSDA). N43 and N151 each carry an N-linked (GlcNAc...) asparagine glycan. A substrate-binding site is contributed by Q152. Catalysis depends on D196, which acts as the Nucleophile. R256 provides a ligand contact to substrate. N282 carries N-linked (GlcNAc...) asparagine glycosylation.

Belongs to the pectinesterase family. Expressed in flower buds.

The protein localises to the secreted. Its subcellular location is the cell wall. The enzyme catalyses [(1-&gt;4)-alpha-D-galacturonosyl methyl ester](n) + n H2O = [(1-&gt;4)-alpha-D-galacturonosyl](n) + n methanol + n H(+). It functions in the pathway glycan metabolism; pectin degradation; 2-dehydro-3-deoxy-D-gluconate from pectin: step 1/5. Its function is as follows. Acts in the modification of cell walls via demethylesterification of cell wall pectin. In Arabidopsis thaliana (Mouse-ear cress), this protein is Probable pectinesterase 67 (PME67).